The sequence spans 142 residues: Universal stress protein C (142 aa).

This sequence belongs to the universal stress protein A family.

The protein localises to the cytoplasm. Required for resistance to DNA-damaging agents. This Escherichia coli (strain K12) protein is Universal stress protein C (uspC).